Here is a 193-residue protein sequence, read N- to C-terminus: Xanthine phosphoribosyltransferase (193 aa).

Residues Leu20 and Thr27 each coordinate xanthine. Position 128-132 (128-132 (ANGQA)) interacts with 5-phospho-alpha-D-ribose 1-diphosphate. A xanthine-binding site is contributed by Lys156.

This sequence belongs to the purine/pyrimidine phosphoribosyltransferase family. Xpt subfamily. Homodimer.

The protein localises to the cytoplasm. It catalyses the reaction XMP + diphosphate = xanthine + 5-phospho-alpha-D-ribose 1-diphosphate. The protein operates within purine metabolism; XMP biosynthesis via salvage pathway; XMP from xanthine: step 1/1. Converts the preformed base xanthine, a product of nucleic acid breakdown, to xanthosine 5'-monophosphate (XMP), so it can be reused for RNA or DNA synthesis. The protein is Xanthine phosphoribosyltransferase of Streptococcus pneumoniae (strain P1031).